The sequence spans 210 residues: Large ribosomal subunit protein bL25 (210 aa).

The segment at 186–210 is disordered; that stretch reads ISSASTEKEAESNQESTSTTPSSES. Residues 198–210 show a composition bias toward low complexity; it reads NQESTSTTPSSES.

Belongs to the bacterial ribosomal protein bL25 family. CTC subfamily. Part of the 50S ribosomal subunit; part of the 5S rRNA/L5/L18/L25 subcomplex. Contacts the 5S rRNA. Binds to the 5S rRNA independently of L5 and L18.

Its function is as follows. This is one of the proteins that binds to the 5S RNA in the ribosome where it forms part of the central protuberance. The polypeptide is Large ribosomal subunit protein bL25 (Ehrlichia chaffeensis (strain ATCC CRL-10679 / Arkansas)).